A 246-amino-acid chain; its full sequence is NAD-dependent protein deacylase (246 aa).

Residues 1 to 245 enclose the Deacetylase sirtuin-type domain; it reads MKEFITKHRD…ELIREILDNP (245 aa). 20–39 serves as a coordination point for NAD(+); sequence GAGISAESGIPTFRGSEGLW. Substrate is bound by residues Tyr-64 and Arg-67. 98-101 lines the NAD(+) pocket; it reads QNVD. Catalysis depends on His-116, which acts as the Proton acceptor. Cys-124, Cys-127, Cys-146, and Cys-149 together coordinate Zn(2+). Residues 186–188, 212–214, and Thr-230 contribute to the NAD(+) site; these read GTS and NPE.

This sequence belongs to the sirtuin family. Class III subfamily. Requires Zn(2+) as cofactor.

The protein localises to the cytoplasm. It carries out the reaction N(6)-acetyl-L-lysyl-[protein] + NAD(+) + H2O = 2''-O-acetyl-ADP-D-ribose + nicotinamide + L-lysyl-[protein]. The enzyme catalyses N(6)-succinyl-L-lysyl-[protein] + NAD(+) + H2O = 2''-O-succinyl-ADP-D-ribose + nicotinamide + L-lysyl-[protein]. In terms of biological role, NAD-dependent lysine deacetylase and desuccinylase that specifically removes acetyl and succinyl groups on target proteins. Modulates the activities of several proteins which are inactive in their acylated form. The polypeptide is NAD-dependent protein deacylase (Leptospira interrogans serogroup Icterohaemorrhagiae serovar Lai (strain 56601)).